Reading from the N-terminus, the 76-residue chain is uncharacterized protein (76 aa).

The interval 1-24 (MPLRLCQGRKDRASDPVRDDGSPP) is disordered. Residues 8–22 (GRKDRASDPVRDDGS) show a composition bias toward basic and acidic residues.

This is an uncharacterized protein from Dryophytes versicolor (chameleon treefrog).